A 311-amino-acid chain; its full sequence is Glycine--tRNA ligase alpha subunit (311 aa).

This sequence belongs to the class-II aminoacyl-tRNA synthetase family. Tetramer of two alpha and two beta subunits.

It localises to the cytoplasm. It carries out the reaction tRNA(Gly) + glycine + ATP = glycyl-tRNA(Gly) + AMP + diphosphate. The sequence is that of Glycine--tRNA ligase alpha subunit from Bradyrhizobium diazoefficiens (strain JCM 10833 / BCRC 13528 / IAM 13628 / NBRC 14792 / USDA 110).